A 298-amino-acid chain; its full sequence is Urease accessory protein UreD (298 aa).

Belongs to the UreD family. In terms of assembly, ureD, UreF and UreG form a complex that acts as a GTP-hydrolysis-dependent molecular chaperone, activating the urease apoprotein by helping to assemble the nickel containing metallocenter of UreC. The UreE protein probably delivers the nickel.

It is found in the cytoplasm. Required for maturation of urease via the functional incorporation of the urease nickel metallocenter. This Marinobacter nauticus (strain ATCC 700491 / DSM 11845 / VT8) (Marinobacter aquaeolei) protein is Urease accessory protein UreD.